Reading from the N-terminus, the 201-residue chain is 3-isopropylmalate dehydratase small subunit (201 aa).

It belongs to the LeuD family. LeuD type 1 subfamily. In terms of assembly, heterodimer of LeuC and LeuD.

The enzyme catalyses (2R,3S)-3-isopropylmalate = (2S)-2-isopropylmalate. Its pathway is amino-acid biosynthesis; L-leucine biosynthesis; L-leucine from 3-methyl-2-oxobutanoate: step 2/4. Functionally, catalyzes the isomerization between 2-isopropylmalate and 3-isopropylmalate, via the formation of 2-isopropylmaleate. This Ruegeria pomeroyi (strain ATCC 700808 / DSM 15171 / DSS-3) (Silicibacter pomeroyi) protein is 3-isopropylmalate dehydratase small subunit.